A 421-amino-acid chain; its full sequence is Alpha-tubulin N-acetyltransferase 1 (421 aa).

An N-acetyltransferase domain is found at 1–190 (MEFPFDVDAL…NNFVIFEGFF (190 aa)). K56 carries the post-translational modification N6-acetyllysine; by autocatalysis. 124–137 (FYIHESVQRHGHGR) contributes to the acetyl-CoA binding site. At K146 the chain carries N6-acetyllysine; by autocatalysis. 160-169 (SQKLLKFLNK) provides a ligand contact to acetyl-CoA. The tract at residues 196–235 (PPAPSLRATRHSRAAAVDPTPAAPARKLPPKRAEGDIKPY) is disordered. Low complexity predominate over residues 209-221 (AAAVDPTPAAPAR). Residues 226 to 235 (KRAEGDIKPY) show a composition bias toward basic and acidic residues. N6-acetyllysine; by autocatalysis occurs at positions 233 and 244. The segment at 252-284 (PLNRAPRRATPPAHPPPRSSSLGNSPERGPLRP) is disordered. Residues S272 and S276 each carry the phosphoserine modification. R305 carries the asymmetric dimethylarginine modification. The tract at residues 306–402 (LLLAADPGGS…PAQSWTVGGD (97 aa)) is disordered. Residue S315 is modified to Phosphoserine. At R323 the chain carries Omega-N-methylarginine. Residues 342–354 (VNSSSPNTGNQDS) show a composition bias toward polar residues. Basic and acidic residues predominate over residues 355 to 367 (KQGEQETKNRSAS).

Belongs to the acetyltransferase ATAT1 family. Component of the BBSome complex. Interacts with AP2 alpha-adaptins, including AP2A2, but not with AP1 gamma-adaptin (AP1G1/AP1G2); this interaction is required for efficient alpha-tubulin acetylation, hence clathrin-coated pits are sites of microtubule acetylation. Post-translationally, autoacetylation strongly increases tubulin acetylation.

It is found in the cytoplasm. The protein resides in the membrane. It localises to the clathrin-coated pit. The protein localises to the cell junction. Its subcellular location is the focal adhesion. It is found in the cell projection. The protein resides in the axon. It localises to the cytoskeleton. The protein localises to the spindle. The catalysed reaction is L-lysyl-[alpha-tubulin] + acetyl-CoA = N(6)-acetyl-L-lysyl-[alpha-tubulin] + CoA + H(+). In terms of biological role, specifically acetylates 'Lys-40' in alpha-tubulin on the lumenal side of microtubules. Promotes microtubule destabilization and accelerates microtubule dynamics; this activity may be independent of acetylation activity. Acetylates alpha-tubulin with a slow enzymatic rate, due to a catalytic site that is not optimized for acetyl transfer. Enters the microtubule through each end and diffuses quickly throughout the lumen of microtubules. Acetylates only long/old microtubules because of its slow acetylation rate since it does not have time to act on dynamically unstable microtubules before the enzyme is released. Required for normal sperm flagellar function. Promotes directional cell locomotion and chemotaxis, through AP2A2-dependent acetylation of alpha-tubulin at clathrin-coated pits that are concentrated at the leading edge of migrating cells. May facilitate primary cilium assembly. In Homo sapiens (Human), this protein is Alpha-tubulin N-acetyltransferase 1.